The primary structure comprises 445 residues: Ktr system potassium uptake protein B (445 aa).

Helical transmembrane passes span 19–39, 46–66, 79–99, 127–147, 161–181, 196–216, 230–250, 286–306, 313–333, 351–371, 377–397, and 408–428; these read VLAI…MLPI, SWID…LAVV, VIMG…VLIV, IGLV…AALI, GLFA…FSLW, LVIT…FDVM, LMLT…FILE, FGSM…IGAG, GIKL…LRGK, ALAV…ALTI, FLQI…TMGL, and IIIV…FSFA.

Belongs to the TrkH potassium transport family. Ktr (TC 2.A.38.4) subfamily. In terms of assembly, homodimer. Part of the KtrAB complex formed by an octameric catalytic ring of KtrA and a membrane associated dimer of KtrB forming a potassium channel.

The protein resides in the cell membrane. Functionally, integral membrane subunit of the KtrAB potassium uptake transporter. The 2 major potassium transporter complexes KtrAB and KtrCD confer resistance to both suddenly imposed and prolonged osmotic stress. This Bacillus subtilis (strain 168) protein is Ktr system potassium uptake protein B (ktrB).